The following is a 45-amino-acid chain: Temporin-SHf (45 aa).

An N-terminal signal peptide occupies residues 1-10 (FLGTINLSLC). The propeptide occupies 11–35 (EEERDADEEERRDEPDESNVEVKKR). Position 43 is a phenylalanine amide (Phe-43).

Belongs to the frog skin active peptide (FSAP) family. Temporin subfamily.

It localises to the secreted. It is found in the target cell membrane. In terms of biological role, non-amphipathic alpha-helical antimicrobial peptide with potent activity against some Gram-positive bacteria (including methicillin-resistant Staphylococcus aureus (MRSA)), weak activity against Gram-negative bacteria and no activity against fungi. Permeabilizates membranes through a detergent-like effect probably via the carpet mechanism. More precisely, it strongly and selectively perturbs anionic bilayers membranes by interacting with the polar headgroups and the glycerol backbone region of the phospholipids, hence disrupting the acyl chain packing of the bilayer. Is not active against Leishmania (promastigote and axenic amastigote forms). Does not show hemolytic activity. Does not show toxicity for human THP-1-derived macrophages. This Pelophylax saharicus (Sahara frog) protein is Temporin-SHf.